We begin with the raw amino-acid sequence, 859 residues long: MKLKDTKSRPKQSSCGKFQTKGIKVVGKWKEVKIDPNMFADGQMDDLVCFEELTDYQLVSPAKNPSSLFSKEAPKRKAQAVSEEEEEEEGKSSSPKKKIKLKKSKNVATEGTSTQKEFEVKDPELEAQGDDMVCDDPEAGEMTSENLVQTAPKKKKNKGKKGLEPSQSTAAKVPKKAKTWIPEVHDQKADVSAWKDLFVPRPVLRALSFLGFSAPTPIQALTLAPAIRDKLDILGAAETGSGKTLAFAIPMIHAVLQWQKRNAAPPPSNTEAPPGETRTEAGAETRSPGKAEAESDALPDDTVIESEALPSDIAAEARAKTGGTVSDQALLFGDDDAGEGPSSLIREKPVPKQNENEEENLDKEQTGNLKQELDDKSATCKAYPKRPLLGLVLTPTRELAVQVKQHIDAVARFTGIKTAILVGGMSTQKQQRMLNRRPEIVVATPGRLWELIKEKHYHLRNLRQLRCLVVDEADRMVEKGHFAELSQLLEMLNDSQYNPKRQTLVFSATLTLVHQAPARILHKKHTKKMDKTAKLDLLMQKIGMRGKPKVIDLTRNEATVETLTETKIHCETDEKDFYLYYFLMQYPGRSLVFANSISCIKRLSGLLKVLDIMPLTLHACMHQKQRLRNLEQFARLEDCVLLATDVAARGLDIPKVQHVIHYQVPRTSEIYVHRSGRTARATNEGLSLMLIGPEDVINFKKIYKTLKKDEDIPLFPVQTKYMDVVKERIRLARQIEKSEYRNFQACLHNSWIEQAAAALEIELEEDMYKGGKADQQEERRRQKQMKVLKKELRHLLSQPLFTESQKTKYPTQSGKPPLLVSAPSKSESALSCLSKQKKKKTKKPKEPQPEQPQPSTSAN.

K17 bears the N6-acetyllysine mark. S60 is subject to Phosphoserine. A disordered region spans residues 61–170; that stretch reads PAKNPSSLFS…KGLEPSQSTA (110 aa). N6-acetyllysine is present on K71. Phosphoserine occurs at positions 82 and 94. Positions 94-105 are enriched in basic residues; that stretch reads SPKKKIKLKKSK. Polar residues predominate over residues 106 to 115; that stretch reads NVATEGTSTQ. Acidic residues predominate over residues 125–139; the sequence is LEAQGDDMVCDDPEA. The Q motif motif lies at 192–220; sequence SAWKDLFVPRPVLRALSFLGFSAPTPIQA. The region spanning 224–528 is the Helicase ATP-binding domain; the sequence is APAIRDKLDI…RILHKKHTKK (305 aa). Residue 237 to 244 participates in ATP binding; the sequence is AETGSGKT. The interval 262–300 is disordered; it reads NAAPPPSNTEAPPGETRTEAGAETRSPGKAEAESDALPD. The segment covering 277-293 has biased composition (basic and acidic residues); sequence TRTEAGAETRSPGKAEA. Residues S287 and S295 each carry the phosphoserine modification. Residue T302 is modified to Phosphothreonine. Residues 326-376 form a disordered region; the sequence is SDQALLFGDDDAGEGPSSLIREKPVPKQNENEEENLDKEQTGNLKQELDDK. K370 participates in a covalent cross-link: Glycyl lysine isopeptide (Lys-Gly) (interchain with G-Cter in SUMO2). The DEAD box signature appears at 471–474; the sequence is DEAD. Residues 578–723 form the Helicase C-terminal domain; sequence YLYYFLMQYP…LFPVQTKYMD (146 aa). Residues K624, K808, and K825 each participate in a glycyl lysine isopeptide (Lys-Gly) (interchain with G-Cter in SUMO2) cross-link. Polar residues-rich tracts occupy residues 799–814 and 823–833; these read PLFT…TQSG and PSKSESALSCL. The disordered stretch occupies residues 799 to 859; that stretch reads PLFTESQKTK…EQPQPSTSAN (61 aa).

This sequence belongs to the DEAD box helicase family. DDX24/MAK5 subfamily. Interacts with FADD. Interacts with RIPK1; this interaction disrupts RLR signaling activation of IFN-dependent transcription factor IRF7. Interacts with NIP7. Interacts with EP300; this interaction prevents TP53 acetylation mediated by EP300. As to quaternary structure, (Microbial infection) Interacts with HIV-1 virus Gag and Rev proteins. In terms of processing, ubiquitinated by MDM2 without targeting DDX24 for proteasomal degradation. Instead, polyubiquitinated DDX24 promotes interaction with NIP7, a component of pre-rRNP processing complex, and associates with pre-rRNA molecules and pre-ribosomal particles. As to expression, ubiquitous. Most abundant in heart and brain, but with lowest levels in thymus and small intestine.

Its subcellular location is the cytoplasm. The protein localises to the nucleus. It carries out the reaction ATP + H2O = ADP + phosphate + H(+). Its function is as follows. ATP-dependent RNA helicase that plays a role in various aspects of RNA metabolism including pre-mRNA splicing and is thereby involved in different biological processes such as cell cycle regulation or innate immunity. Plays an inhibitory role in TP53 transcriptional activity and subsequently in TP53 controlled cell growth arrest and senescence by inhibiting its EP300 mediated acetylation. Negatively regulates cytosolic RNA-mediated innate immune signaling at least in part by affecting RIPK1/IRF7 interactions. Alternatively, possesses antiviral activity by recognizing gammaherpesvirus transcripts in the context of lytic reactivation. Plays an essential role in cell cycle regulation in vascular smooth muscle cells by interacting with and regulating FANCA (Fanconi anemia complementation group A) mRNA. Functionally, (Microbial infection) Plays a positive role in HIV-1 infection by promoting Rev-dependent nuclear export of viral RNAs and their packaging into virus particles. This Homo sapiens (Human) protein is ATP-dependent RNA helicase DDX24 (DDX24).